A 333-amino-acid chain; its full sequence is N-acetyl-gamma-glutamyl-phosphate reductase (333 aa).

Cys145 is an active-site residue.

It belongs to the NAGSA dehydrogenase family. Type 1 subfamily.

The protein localises to the cytoplasm. It catalyses the reaction N-acetyl-L-glutamate 5-semialdehyde + phosphate + NADP(+) = N-acetyl-L-glutamyl 5-phosphate + NADPH + H(+). The protein operates within amino-acid biosynthesis; L-arginine biosynthesis; N(2)-acetyl-L-ornithine from L-glutamate: step 3/4. Its function is as follows. Catalyzes the NADPH-dependent reduction of N-acetyl-5-glutamyl phosphate to yield N-acetyl-L-glutamate 5-semialdehyde. The polypeptide is N-acetyl-gamma-glutamyl-phosphate reductase (Salinispora tropica (strain ATCC BAA-916 / DSM 44818 / JCM 13857 / NBRC 105044 / CNB-440)).